We begin with the raw amino-acid sequence, 516 residues long: Signal recognition particle protein (516 aa).

GTP is bound by residues Gly-108–Thr-115, Asp-191–Arg-195, and Thr-249–Asp-252. The tract at residues Met-383 to Gly-405 is disordered.

This sequence belongs to the GTP-binding SRP family. SRP54 subfamily. As to quaternary structure, part of the signal recognition particle protein translocation system, which is composed of SRP and FtsY.

The protein resides in the cytoplasm. It catalyses the reaction GTP + H2O = GDP + phosphate + H(+). Functionally, involved in targeting and insertion of nascent membrane proteins into the cytoplasmic membrane. Binds to the hydrophobic signal sequence of the ribosome-nascent chain (RNC) as it emerges from the ribosomes. The SRP-RNC complex is then targeted to the cytoplasmic membrane where it interacts with the SRP receptor FtsY. This Streptococcus mutans serotype c (strain ATCC 700610 / UA159) protein is Signal recognition particle protein.